We begin with the raw amino-acid sequence, 95 residues long: Histone-like DNA-binding protein (95 aa).

The protein belongs to the bacterial histone-like protein family.

In Rickettsia rickettsii, this protein is Histone-like DNA-binding protein.